The chain runs to 758 residues: Dachshund homolog 1 (758 aa).

2 disordered regions span residues 1–105 (MAVP…SNCN) and 134–185 (INAS…TPQN). The span at 20-53 (ISTSASSSGTTTSTSSATSSPAPSIGPPASSGPT) shows a compositional bias: low complexity. Over residues 73-102 (TGGGGGGGGSGGGGGSSGNGGGGGGGGGGS) the composition is skewed to gly residues. Over residues 140 to 163 (SSSSSSSSSSSSSSSSSSSSSSSS) the composition is skewed to low complexity. Over residues 174–185 (STPSPVENTPQN) the composition is skewed to polar residues. A DACHbox-N region spans residues 189 to 275 (KMVDLRGAKV…LISRKDFETL (87 aa)). The interaction with SIX6 and HDAC3 stretch occupies residues 189–384 (KMVDLRGAKV…VGSSDGSWDK (196 aa)). Disordered stretches follow at residues 280-302 (TNAS…PENS), 358-414 (SNNQ…PLSH), 474-532 (SPPS…RIPV), and 544-564 (MGLS…GHDM). Polar residues-rich tracts occupy residues 292–301 (RTQSVTSPEN), 358–380 (SNNQ…SSDG), and 387–399 (LPSS…QASI). Serine 491 carries the phosphoserine modification. Over residues 506–524 (SHPSSHRSSSVSSSPARTE) the composition is skewed to low complexity. The segment covering 555–564 (KEGDLAGHDM) has biased composition (basic and acidic residues). Residues 616–696 (SSIETLLTNI…KAKRKLQEAL (81 aa)) form a DACHbox-C region. The interaction with SIN3A stretch occupies residues 627-706 (GLLKVAIDNA…EFETKRREQA (80 aa)). Residues 630 to 718 (KVAIDNARAQ…TLKQAASTDS (89 aa)) are a coiled coil.

The protein belongs to the DACH/dachshund family. Interacts with SIX1, SIX6 and EYA3. Interacts with NCOR1 and HDAC3 through its N-terminus. Interacts with SIN3A through its C-terminus. Interacts with SMAD3 and SMAD4. Widely expressed. Isoform 2 is found in brain, heart, kidney, liver, leukocytes and spleen. Isoform 3 is found in liver and heart. Isoform 4 is found in spleen.

The protein resides in the nucleus. Functionally, transcription factor that is involved in regulation of organogenesis. Seems to be a regulator of SIX1, SIX6 and probably SIX5. Corepression of precursor cell proliferation in myoblasts by SIX1 is switched to coactivation through recruitment of EYA3 to the SIX1-DACH1 complex. Transcriptional activation also seems to involve association of CREBBP. Seems to act as a corepressor of SIX6 in regulating proliferation by directly repressing cyclin-dependent kinase inhibitors, including the p27Kip1 promoter. Inhibits TGF-beta signaling through interaction with SMAD4 and NCOR1. Binds to chromatin DNA via its DACHbox-N domain. The protein is Dachshund homolog 1 (DACH1) of Homo sapiens (Human).